A 2144-amino-acid polypeptide reads, in one-letter code: HEAT repeat-containing protein 1 (2144 aa).

At Met1 the chain carries N-acetylmethionine. N-acetylthreonine; in HEAT repeat-containing protein 1, N-terminally processed is present on Thr2. Position 516 is a phosphoserine (Ser516). The HEAT 1 repeat unit spans residues 913–951 (ASISSPVVTSLLINLGSPVKEVRRAAIQCLQALSGVASP). Positions 1170 to 1191 (KAKPLGTVQQKRRQKMQQKKSQ) are disordered. At Ser1190 the chain carries Phosphoserine. The HEAT 2 repeat unit spans residues 1347-1385 (NKTVKMVIPALIQSDSGDSIEVSRNVEEIVVKIISVFVD). Ser1492 carries the post-translational modification Phosphoserine. 3 HEAT repeats span residues 1594–1632 (LLPT…QNIS), 1730–1770 (IPQL…VVET), and 2100–2138 (IVLL…VLGE).

It belongs to the HEATR1/UTP10 family. As to quaternary structure, part of the small subunit (SSU) processome, composed of more than 70 proteins and the RNA chaperone small nucleolar RNA (snoRNA) U3. Interacts with MYC; the interaction is required for localization of MYC to the nucleolus.

It is found in the nucleus. The protein resides in the nucleolus. Its function is as follows. Ribosome biogenesis factor; required for recruitment of Myc to nucleoli. Involved in nucleolar processing of pre-18S ribosomal RNA. Required for optimal pre-ribosomal RNA transcription by RNA polymerase I. Part of the small subunit (SSU) processome, first precursor of the small eukaryotic ribosomal subunit. During the assembly of the SSU processome in the nucleolus, many ribosome biogenesis factors, an RNA chaperone and ribosomal proteins associate with the nascent pre-rRNA and work in concert to generate RNA folding, modifications, rearrangements and cleavage as well as targeted degradation of pre-ribosomal RNA by the RNA exosome. Involved in neuronal-lineage cell proliferation. The polypeptide is HEAT repeat-containing protein 1 (Homo sapiens (Human)).